The primary structure comprises 409 residues: Peptidase T (409 aa).

Histidine 78 serves as a coordination point for Zn(2+). Aspartate 80 is an active-site residue. Aspartate 140 is a Zn(2+) binding site. Glutamate 173 (proton acceptor) is an active-site residue. Residues glutamate 174, aspartate 196, and histidine 379 each coordinate Zn(2+).

This sequence belongs to the peptidase M20B family. Zn(2+) is required as a cofactor.

Its subcellular location is the cytoplasm. The enzyme catalyses Release of the N-terminal residue from a tripeptide.. Cleaves the N-terminal amino acid of tripeptides. The polypeptide is Peptidase T (Escherichia coli O139:H28 (strain E24377A / ETEC)).